The sequence spans 460 residues: Polygalacturonase (460 aa).

A signal peptide spans 1–26; it reads MALKTQLLWSFVVVFVVSFSTTSCSG. A glycan (N-linked (GlcNAc...) asparagine) is linked at N280. D292 functions as the Proton donor in the catalytic mechanism. H315 is a catalytic residue. The N-linked (GlcNAc...) asparagine glycan is linked to N421.

The protein belongs to the glycosyl hydrolase 28 family.

It is found in the secreted. It localises to the cell wall. The catalysed reaction is (1,4-alpha-D-galacturonosyl)n+m + H2O = (1,4-alpha-D-galacturonosyl)n + (1,4-alpha-D-galacturonosyl)m.. In terms of biological role, acts in concert with the pectinesterase, in the ripening process. Is involved in cell wall metabolism, specifically in polyuronide degradation. The sequence is that of Polygalacturonase from Malus domestica (Apple).